The following is a 179-amino-acid chain: Macro domain-containing protein XCC3184 (179 aa).

Positions 1 to 175 (MRIEVWQGDI…AYHQALATQE (175 aa)) constitute a Macro domain.

The protein belongs to the MacroD-type family.

This is Macro domain-containing protein XCC3184 from Xanthomonas campestris pv. campestris (strain ATCC 33913 / DSM 3586 / NCPPB 528 / LMG 568 / P 25).